Consider the following 94-residue polypeptide: Co-chaperonin GroES (94 aa).

It belongs to the GroES chaperonin family. In terms of assembly, heptamer of 7 subunits arranged in a ring. Interacts with the chaperonin GroEL.

It localises to the cytoplasm. Functionally, together with the chaperonin GroEL, plays an essential role in assisting protein folding. The GroEL-GroES system forms a nano-cage that allows encapsulation of the non-native substrate proteins and provides a physical environment optimized to promote and accelerate protein folding. GroES binds to the apical surface of the GroEL ring, thereby capping the opening of the GroEL channel. This chain is Co-chaperonin GroES, found in Bacillus subtilis (strain 168).